The following is a 436-amino-acid chain: 3-ketoacyl-CoA thiolase (436 aa).

The active-site Acyl-thioester intermediate is the C99. Catalysis depends on proton acceptor residues H392 and C422.

This sequence belongs to the thiolase-like superfamily. Thiolase family. In terms of assembly, heterotetramer of two alpha chains (FadJ) and two beta chains (FadI).

The protein resides in the cytoplasm. The catalysed reaction is an acyl-CoA + acetyl-CoA = a 3-oxoacyl-CoA + CoA. It functions in the pathway lipid metabolism; fatty acid beta-oxidation. In terms of biological role, catalyzes the final step of fatty acid oxidation in which acetyl-CoA is released and the CoA ester of a fatty acid two carbons shorter is formed. The sequence is that of 3-ketoacyl-CoA thiolase from Salmonella paratyphi A (strain AKU_12601).